Reading from the N-terminus, the 258-residue chain is Aspartate/glutamate leucyltransferase (258 aa).

Belongs to the R-transferase family. Bpt subfamily.

It localises to the cytoplasm. It catalyses the reaction N-terminal L-glutamyl-[protein] + L-leucyl-tRNA(Leu) = N-terminal L-leucyl-L-glutamyl-[protein] + tRNA(Leu) + H(+). It carries out the reaction N-terminal L-aspartyl-[protein] + L-leucyl-tRNA(Leu) = N-terminal L-leucyl-L-aspartyl-[protein] + tRNA(Leu) + H(+). Functionally, functions in the N-end rule pathway of protein degradation where it conjugates Leu from its aminoacyl-tRNA to the N-termini of proteins containing an N-terminal aspartate or glutamate. The protein is Aspartate/glutamate leucyltransferase of Rhizobium leguminosarum bv. trifolii (strain WSM2304).